A 459-amino-acid chain; its full sequence is Septin-4 (459 aa).

4 positions are modified to phosphoserine: Ser-10, Ser-49, Ser-98, and Ser-99. 2 disordered regions span residues 18 to 52 (FVKD…SPDL) and 70 to 98 (SQQY…PYDS). The Septin-type G domain maps to 122–395 (KGFDFTLMVA…ENYRAQCIQS (274 aa)). The interval 132–139 (GESGLGKS) is G1 motif. Residues 132–139 (GESGLGKS) and Thr-166 contribute to the GTP site. Residues 189-192 (DTPG) are G3 motif. Residues 270–273 (AKAD) are G4 motif. Position 271–279 (271–279 (KADTLTPSE)) interacts with GTP. A Phosphoserine modification is found at Ser-306. GTP is bound by residues Gly-329 and Arg-344. The tract at residues 410-430 (TRESGTDFPIPAVPPGTDPET) is disordered. Residue Ser-413 is modified to Phosphoserine. Position 415 is a phosphothreonine (Thr-415). Residues 434 to 459 (IREKDEELRRMQEMLHKIQRQMKETH) are a coiled coil.

The protein belongs to the TRAFAC class TrmE-Era-EngA-EngB-Septin-like GTPase superfamily. Septin GTPase family. Septins polymerize into heterooligomeric protein complexes that form filaments, and can associate with cellular membranes, actin filaments and microtubules. GTPase activity is required for filament formation. Interacts with SEPTIN8. Component of a septin core octameric complex consisting of SEPTIN12, SEPTIN7, SEPTIN6 and SEPTIN2 or SEPTIN4 in the order 12-7-6-2-2-6-7-12 or 12-7-6-4-4-6-7-12. Interacts with SEPTIN14 (via C-terminus). Interacts with DYRK1A. Interacts with SLC6A3/DAT and SNCA/alpha-synuclein. Interacts with STX1A; in the striatum. Interacts with XIAP (via BIR3 domain) following the induction of apoptosis. Interacts with AREL1 (via HECT domain); in the cytoplasm following induction of apoptosis. Phosphorylated by DYRK1A.

Its subcellular location is the cytoplasm. It localises to the cell projection. The protein localises to the cilium. It is found in the flagellum. The protein resides in the cytoplasmic vesicle. Its subcellular location is the secretory vesicle. It localises to the axon. The protein localises to the dendrite. It is found in the perikaryon. Functionally, filament-forming cytoskeletal GTPase. Pro-apoptotic protein involved in LGR5-positive intestinal stem cell and Paneth cell expansion in the intestines, via its interaction with XIAP. May also play a role in the regulation of cell fate in the intestine. Positive regulator of apoptosis involved in hematopoietic stem cell homeostasis; via its interaction with XIAP. Negative regulator of repair and hair follicle regeneration in response to injury, due to inhibition of hair follicle stem cell proliferation, potentially via its interaction with XIAP. Plays an important role in male fertility and sperm motility. During spermiogenesis, essential for the establishment of the annulus (a fibrous ring structure connecting the midpiece and the principal piece of the sperm flagellum) which is a requisite for the structural and mechanical integrity of the sperm. Involved in the migration of cortical neurons and the formation of neuron leading processes during embryonic development. Required for dopaminergic metabolism in presynaptic autoreceptors; potentially via activity as a presynaptic scaffold protein. This Rattus norvegicus (Rat) protein is Septin-4.